Consider the following 92-residue polypeptide: Defensin alpha 4 (92 aa).

The N-terminal stretch at 1–19 (MKTLVLLSALVLLAFQVQA) is a signal peptide. Positions 20 to 58 (DPIQNTDEETKTEEQPGEEDQAVSISFGGQEGSALHEKS) are excised as a propeptide. Positions 23–42 (QNTDEETKTEEQPGEEDQAV) are disordered. 3 disulfides stabilise this stretch: Cys64/Cys89, Cys66/Cys81, and Cys71/Cys88.

It belongs to the alpha-defensin family. Paneth cells of the small bowel.

It is found in the secreted. The protein resides in the cytoplasmic vesicle. The protein localises to the secretory vesicle. Its function is as follows. Host-defense peptide that has antimicrobial activity. Exhibits activity against Gram-negative E.coli (in vitro). Probably contributes to the antimicrobial barrier function of the small bowel mucosa. The chain is Defensin alpha 4 from Mus musculus (Mouse).